A 212-amino-acid polypeptide reads, in one-letter code: 3-isopropylmalate dehydratase small subunit (212 aa).

This sequence belongs to the LeuD family. LeuD type 1 subfamily. Heterodimer of LeuC and LeuD.

The enzyme catalyses (2R,3S)-3-isopropylmalate = (2S)-2-isopropylmalate. It participates in amino-acid biosynthesis; L-leucine biosynthesis; L-leucine from 3-methyl-2-oxobutanoate: step 2/4. Functionally, catalyzes the isomerization between 2-isopropylmalate and 3-isopropylmalate, via the formation of 2-isopropylmaleate. The polypeptide is 3-isopropylmalate dehydratase small subunit (Thiobacillus denitrificans (strain ATCC 25259 / T1)).